The sequence spans 715 residues: Fatty acid oxidation complex subunit alpha (715 aa).

An enoyl-CoA hydratase/isomerase region spans residues 1 to 190 (MIYEGKAITV…KVGAVDAVVA (190 aa)). Substrate is bound at residue aspartate 297. The tract at residues 312–715 (HDVKQAAVLG…MAKNGQRFFN (404 aa)) is 3-hydroxyacyl-CoA dehydrogenase. NAD(+) is bound by residues methionine 325, aspartate 344, 401–403 (VVE), lysine 408, and serine 430. Histidine 451 acts as the For 3-hydroxyacyl-CoA dehydrogenase activity in catalysis. Asparagine 454 is an NAD(+) binding site. Residues asparagine 501 and tyrosine 660 each contribute to the substrate site.

In the N-terminal section; belongs to the enoyl-CoA hydratase/isomerase family. The protein in the C-terminal section; belongs to the 3-hydroxyacyl-CoA dehydrogenase family. Heterotetramer of two alpha chains (FadB) and two beta chains (FadA).

It carries out the reaction a (3S)-3-hydroxyacyl-CoA + NAD(+) = a 3-oxoacyl-CoA + NADH + H(+). It catalyses the reaction a (3S)-3-hydroxyacyl-CoA = a (2E)-enoyl-CoA + H2O. The catalysed reaction is a 4-saturated-(3S)-3-hydroxyacyl-CoA = a (3E)-enoyl-CoA + H2O. The enzyme catalyses (3S)-3-hydroxybutanoyl-CoA = (3R)-3-hydroxybutanoyl-CoA. It carries out the reaction a (3Z)-enoyl-CoA = a 4-saturated (2E)-enoyl-CoA. It catalyses the reaction a (3E)-enoyl-CoA = a 4-saturated (2E)-enoyl-CoA. It functions in the pathway lipid metabolism; fatty acid beta-oxidation. In terms of biological role, involved in the aerobic and anaerobic degradation of long-chain fatty acids via beta-oxidation cycle. Catalyzes the formation of 3-oxoacyl-CoA from enoyl-CoA via L-3-hydroxyacyl-CoA. It can also use D-3-hydroxyacyl-CoA and cis-3-enoyl-CoA as substrate. The polypeptide is Fatty acid oxidation complex subunit alpha (Pseudomonas putida (strain ATCC 47054 / DSM 6125 / CFBP 8728 / NCIMB 11950 / KT2440)).